A 172-amino-acid chain; its full sequence is Shikimate kinase (172 aa).

11–16 is an ATP binding site; sequence GAGKST. Position 15 (S15) interacts with Mg(2+). Residues D33, R57, and G79 each coordinate substrate. R117 lines the ATP pocket. R136 lines the substrate pocket. Residue R153 participates in ATP binding.

This sequence belongs to the shikimate kinase family. As to quaternary structure, monomer. Mg(2+) serves as cofactor.

The protein resides in the cytoplasm. It catalyses the reaction shikimate + ATP = 3-phosphoshikimate + ADP + H(+). It functions in the pathway metabolic intermediate biosynthesis; chorismate biosynthesis; chorismate from D-erythrose 4-phosphate and phosphoenolpyruvate: step 5/7. Functionally, catalyzes the specific phosphorylation of the 3-hydroxyl group of shikimic acid using ATP as a cosubstrate. This Pseudomonas entomophila (strain L48) protein is Shikimate kinase.